The chain runs to 1081 residues: Carbamoyl phosphate synthase large chain (1081 aa).

Positions 1–410 (MPKRTDIKTI…SFQKALRGLE (410 aa)) are carboxyphosphate synthetic domain. R129, R176, G182, G183, E215, L217, E222, G248, I249, H250, Q292, and E306 together coordinate ATP. The ATP-grasp 1 domain occupies 133 to 335 (KEAMTKIGLG…IAKVAAKLAV (203 aa)). 3 residues coordinate Mg(2+): Q292, E306, and N308. Residues Q292, E306, and N308 each contribute to the Mn(2+) site. The oligomerization domain stretch occupies residues 411–558 (VGVDGLDEKS…YEAEHGECEA (148 aa)). The interval 559-944 (DPTERKKIMV…ALFKSQLAAG (386 aa)) is carbamoyl phosphate synthetic domain. An ATP-grasp 2 domain is found at 683–878 (QKLLHDLGLR…LAKVAARCMA (196 aa)). R719, R758, L760, E765, G790, V791, H792, S793, Q833, and E849 together coordinate ATP. Mg(2+) is bound by residues Q833, E849, and N851. Positions 833, 849, and 851 each coordinate Mn(2+). The MGS-like domain maps to 945 to 1081 (SRLPEKGTVL…YDLQGLHASL (137 aa)). An allosteric domain region spans residues 945–1081 (SRLPEKGTVL…YDLQGLHASL (137 aa)).

Belongs to the CarB family. Composed of two chains; the small (or glutamine) chain promotes the hydrolysis of glutamine to ammonia, which is used by the large (or ammonia) chain to synthesize carbamoyl phosphate. Tetramer of heterodimers (alpha,beta)4. Requires Mg(2+) as cofactor. Mn(2+) is required as a cofactor.

It catalyses the reaction hydrogencarbonate + L-glutamine + 2 ATP + H2O = carbamoyl phosphate + L-glutamate + 2 ADP + phosphate + 2 H(+). It carries out the reaction hydrogencarbonate + NH4(+) + 2 ATP = carbamoyl phosphate + 2 ADP + phosphate + 2 H(+). It functions in the pathway amino-acid biosynthesis; L-arginine biosynthesis; carbamoyl phosphate from bicarbonate: step 1/1. It participates in pyrimidine metabolism; UMP biosynthesis via de novo pathway; (S)-dihydroorotate from bicarbonate: step 1/3. In terms of biological role, large subunit of the glutamine-dependent carbamoyl phosphate synthetase (CPSase). CPSase catalyzes the formation of carbamoyl phosphate from the ammonia moiety of glutamine, carbonate, and phosphate donated by ATP, constituting the first step of 2 biosynthetic pathways, one leading to arginine and/or urea and the other to pyrimidine nucleotides. The large subunit (synthetase) binds the substrates ammonia (free or transferred from glutamine from the small subunit), hydrogencarbonate and ATP and carries out an ATP-coupled ligase reaction, activating hydrogencarbonate by forming carboxy phosphate which reacts with ammonia to form carbamoyl phosphate. This is Carbamoyl phosphate synthase large chain from Ralstonia nicotianae (strain ATCC BAA-1114 / GMI1000) (Ralstonia solanacearum).